Here is a 463-residue protein sequence, read N- to C-terminus: Adenosylhomocysteinase (463 aa).

Residues Thr-54, Asp-128, and Glu-189 each contribute to the substrate site. An NAD(+)-binding site is contributed by 190–192 (TTT). Residues Lys-219 and Asp-223 each contribute to the substrate site. NAD(+)-binding positions include Asn-224, 253-258 (GYGDVG), Glu-276, Asn-311, 332-334 (IGH), and Asn-377.

The protein belongs to the adenosylhomocysteinase family. NAD(+) is required as a cofactor.

It is found in the cytoplasm. The catalysed reaction is S-adenosyl-L-homocysteine + H2O = L-homocysteine + adenosine. It participates in amino-acid biosynthesis; L-homocysteine biosynthesis; L-homocysteine from S-adenosyl-L-homocysteine: step 1/1. In terms of biological role, may play a key role in the regulation of the intracellular concentration of adenosylhomocysteine. This Cereibacter sphaeroides (Rhodobacter sphaeroides) protein is Adenosylhomocysteinase.